The sequence spans 232 residues: Uracil-DNA glycosylase (232 aa).

The Proton acceptor role is filled by D71.

It belongs to the uracil-DNA glycosylase (UDG) superfamily. UNG family.

It is found in the cytoplasm. The catalysed reaction is Hydrolyzes single-stranded DNA or mismatched double-stranded DNA and polynucleotides, releasing free uracil.. Its function is as follows. Excises uracil residues from the DNA which can arise as a result of misincorporation of dUMP residues by DNA polymerase or due to deamination of cytosine. The protein is Uracil-DNA glycosylase of Azotobacter vinelandii (strain DJ / ATCC BAA-1303).